The sequence spans 499 residues: Glutamate--tRNA ligase (499 aa).

A 'HIGH' region motif is present at residues 12–22 (PSPTGHLHIGN). A 'KMSKS' region motif is present at residues 259–263 (KLSKR). Position 262 (K262) interacts with ATP.

This sequence belongs to the class-I aminoacyl-tRNA synthetase family. Glutamate--tRNA ligase type 1 subfamily. In terms of assembly, monomer.

The protein localises to the cytoplasm. It catalyses the reaction tRNA(Glu) + L-glutamate + ATP = L-glutamyl-tRNA(Glu) + AMP + diphosphate. Its function is as follows. Catalyzes the attachment of glutamate to tRNA(Glu) in a two-step reaction: glutamate is first activated by ATP to form Glu-AMP and then transferred to the acceptor end of tRNA(Glu). The protein is Glutamate--tRNA ligase of Lactobacillus gasseri (strain ATCC 33323 / DSM 20243 / BCRC 14619 / CIP 102991 / JCM 1131 / KCTC 3163 / NCIMB 11718 / NCTC 13722 / AM63).